The sequence spans 180 residues: Crossover junction endodeoxyribonuclease RuvC (180 aa).

Residues Asp7, Glu66, and Asp138 contribute to the active site. 3 residues coordinate Mg(2+): Asp7, Glu66, and Asp138.

Belongs to the RuvC family. In terms of assembly, homodimer which binds Holliday junction (HJ) DNA. The HJ becomes 2-fold symmetrical on binding to RuvC with unstacked arms; it has a different conformation from HJ DNA in complex with RuvA. In the full resolvosome a probable DNA-RuvA(4)-RuvB(12)-RuvC(2) complex forms which resolves the HJ. It depends on Mg(2+) as a cofactor.

The protein localises to the cytoplasm. It carries out the reaction Endonucleolytic cleavage at a junction such as a reciprocal single-stranded crossover between two homologous DNA duplexes (Holliday junction).. Functionally, the RuvA-RuvB-RuvC complex processes Holliday junction (HJ) DNA during genetic recombination and DNA repair. Endonuclease that resolves HJ intermediates. Cleaves cruciform DNA by making single-stranded nicks across the HJ at symmetrical positions within the homologous arms, yielding a 5'-phosphate and a 3'-hydroxyl group; requires a central core of homology in the junction. The consensus cleavage sequence is 5'-(A/T)TT(C/G)-3'. Cleavage occurs on the 3'-side of the TT dinucleotide at the point of strand exchange. HJ branch migration catalyzed by RuvA-RuvB allows RuvC to scan DNA until it finds its consensus sequence, where it cleaves and resolves the cruciform DNA. This Herminiimonas arsenicoxydans protein is Crossover junction endodeoxyribonuclease RuvC.